The sequence spans 436 residues: Magnesium transporter MRS2-4 (436 aa).

The tract at residues 1-56 (MGKGPLSFRRLSSIRHRKKGSAVKDDSAQTSTPSSPPPPLPIHAGGSAVGATGKAK) is disordered. Positions 12 to 21 (SSIRHRKKGS) are enriched in basic residues. The segment covering 44–53 (AGGSAVGATG) has biased composition (low complexity). The next 2 membrane-spanning stretches (helical) occupy residues 372-392 (LTLT…SLFG) and 405-425 (VFGY…MVTL). A Required for magnesium transport activity motif is present at residues 392 to 394 (GMN).

It belongs to the CorA metal ion transporter (MIT) (TC 1.A.35.5) family. In terms of tissue distribution, expressed in the whole plant except roots.

Its subcellular location is the membrane. In terms of biological role, magnesium transporter that may mediate the influx of magnesium. In Arabidopsis thaliana (Mouse-ear cress), this protein is Magnesium transporter MRS2-4 (MRS2-4).